The sequence spans 290 residues: Light-independent protochlorophyllide reductase iron-sulfur ATP-binding protein (290 aa).

Residues 34 to 39 and lysine 63 contribute to the ATP site; that span reads GIGKST. A Mg(2+)-binding site is contributed by serine 38. Positions 119 and 153 each coordinate [4Fe-4S] cluster. ATP-binding positions include 204-205 and 228-230; these read NR and PDL.

It belongs to the NifH/BchL/ChlL family. Homodimer. Protochlorophyllide reductase is composed of three subunits; BchL, BchN and BchB. It depends on [4Fe-4S] cluster as a cofactor.

The catalysed reaction is chlorophyllide a + oxidized 2[4Fe-4S]-[ferredoxin] + 2 ADP + 2 phosphate = protochlorophyllide a + reduced 2[4Fe-4S]-[ferredoxin] + 2 ATP + 2 H2O. Its pathway is porphyrin-containing compound metabolism; bacteriochlorophyll biosynthesis (light-independent). In terms of biological role, component of the dark-operative protochlorophyllide reductase (DPOR) that uses Mg-ATP and reduced ferredoxin to reduce ring D of protochlorophyllide (Pchlide) to form chlorophyllide a (Chlide). This reaction is light-independent. The L component serves as a unique electron donor to the NB-component of the complex, and binds Mg-ATP. This is Light-independent protochlorophyllide reductase iron-sulfur ATP-binding protein from Rhodospirillum rubrum.